A 398-amino-acid chain; its full sequence is Secreted aspartic protease 3 (398 aa).

The first 18 residues, 1 to 18 (MFLKNIFIALAIALLADA), serve as a signal peptide directing secretion. A propeptide spans 19–58 (TPTTFNNSPGFVALNFDVIKTHKNVTGPQGEINTNVNVKR) (activation peptide). Residue N42 is glycosylated (N-linked (GlcNAc...) asparagine). A Peptidase A1 domain is found at 72–384 (YASDITVGSN…DLDDNEISLA (313 aa)). D90 is a catalytic residue. 90 to 92 (DTG) is a pepstatin A binding site. A compositionally biased stretch (polar residues) spans 103–112 (VSCQAGQGQD). The disordered stretch occupies residues 103-139 (VSCQAGQGQDPNFCKNEGTYSPSSSSSSQNLNSPFSI). C105 and C116 are joined by a disulfide. Positions 123–138 (SPSSSSSSQNLNSPFS) are enriched in low complexity. 140–143 (EYGD) is a binding site for pepstatin A. 4 residues coordinate Zn(2+): H188, D248, H254, and D270. D274 is a catalytic residue. 274-278 (DSGTT) is a pepstatin A binding site. C312 and C350 are oxidised to a cystine. N313 carries an N-linked (GlcNAc...) asparagine glycan.

The protein belongs to the peptidase A1 family. As to quaternary structure, monomer.

It is found in the secreted. It catalyses the reaction Preferential cleavage at the carboxyl of hydrophobic amino acids, but fails to cleave 15-Leu-|-Tyr-16, 16-Tyr-|-Leu-17 and 24-Phe-|-Phe-25 of insulin B chain. Activates trypsinogen, and degrades keratin.. Its activity is regulated as follows. Inhibited by pepstatin A analogs. In terms of biological role, secreted aspartic peptidases (SAPs) are a group of ten acidic hydrolases considered as key virulence factors. These enzymes supply the fungus with nutrient amino acids as well as are able to degrade the selected host's proteins involved in the immune defense. Induces host inflammatory cytokine production in a proteolytic activity-independent way. Moreover, acts toward human hemoglobin though limited proteolysis to generate a variety of antimicrobial hemocidins, enabling to compete with the other microorganisms of the same physiological niche using the microbicidal peptides generated from the host protein. Its function is as follows. Plays a key role in defense against host by cleaving histatin-5 (Hst 5), a peptide from human saliva that carries out fungicidal activity. The cleavage rate decreases in an order of SAP2 &gt; SAP9 &gt; SAP3 &gt; SAP7 &gt; SAP4 &gt; SAP1 &gt; SAP8. The first cleavage occurs between residues 'Lys-17' and 'His-18' of Hst 5, giving DSHAKRHHGYKRKFHEK and HHSHRGY peptides. Simultaneously, the DSHAKRHHGYKRK peptide is also formed. Further fragmentation by SAP3 results in DSHAKRHHGY and KRKFHEK products. In Candida albicans (strain SC5314 / ATCC MYA-2876) (Yeast), this protein is Secreted aspartic protease 3.